The primary structure comprises 190 residues: Ganglioside GM2 activator (190 aa).

The signal sequence occupies residues 1-23; that stretch reads MQSLMQAPVLIALGLLFAAPAQA. Cystine bridges form between C36-C180, C96-C103, C109-C135, and C122-C133. Residue N60 is glycosylated (N-linked (GlcNAc...) asparagine).

The protein localises to the lysosome. It catalyses the reaction cholesterol(in) = cholesterol(out). Functionally, the large binding pocket can accommodate several single chain phospholipids and fatty acids, GM2A also exhibits some calcium-independent phospholipase activity. Binds gangliosides and stimulates ganglioside GM2 degradation. It stimulates only the breakdown of ganglioside GM2 and glycolipid GA2 by beta-hexosaminidase A. It extracts single GM2 molecules from membranes and presents them in soluble form to beta-hexosaminidase A for cleavage of N-acetyl-D-galactosamine and conversion to GM3. Has cholesterol transfer activity. The polypeptide is Ganglioside GM2 activator (GM2A) (Macaca fascicularis (Crab-eating macaque)).